A 426-amino-acid chain; its full sequence is Probable imidazolonepropionase (426 aa).

Residues Tyr158 and His192 each coordinate 4-imidazolone-5-propanoate. Tyr158 provides a ligand contact to N-formimidoyl-L-glutamate. His260 contacts Fe(3+). A Zn(2+)-binding site is contributed by His260. Residue Glu263 coordinates 4-imidazolone-5-propanoate. Position 334 (Asp334) interacts with Fe(3+). Zn(2+) is bound at residue Asp334. Asn336 lines the N-formimidoyl-L-glutamate pocket.

It belongs to the metallo-dependent hydrolases superfamily. HutI family. Zn(2+) is required as a cofactor. Requires Fe(3+) as cofactor.

The catalysed reaction is 4-imidazolone-5-propanoate + H2O = N-formimidoyl-L-glutamate. The protein operates within amino-acid degradation; L-histidine degradation into L-glutamate; N-formimidoyl-L-glutamate from L-histidine: step 3/3. This chain is Probable imidazolonepropionase (amdhd1), found in Dictyostelium discoideum (Social amoeba).